Consider the following 429-residue polypeptide: Enolase (429 aa).

Gln-162 contacts (2R)-2-phosphoglycerate. Glu-204 (proton donor) is an active-site residue. Residues Asp-241, Glu-283, and Asp-310 each contribute to the Mg(2+) site. 4 residues coordinate (2R)-2-phosphoglycerate: Lys-335, Arg-364, Ser-365, and Lys-386. Catalysis depends on Lys-335, which acts as the Proton acceptor.

This sequence belongs to the enolase family. Mg(2+) is required as a cofactor.

It is found in the cytoplasm. Its subcellular location is the secreted. It localises to the cell surface. The enzyme catalyses (2R)-2-phosphoglycerate = phosphoenolpyruvate + H2O. It participates in carbohydrate degradation; glycolysis; pyruvate from D-glyceraldehyde 3-phosphate: step 4/5. Catalyzes the reversible conversion of 2-phosphoglycerate (2-PG) into phosphoenolpyruvate (PEP). It is essential for the degradation of carbohydrates via glycolysis. In Mycobacterium leprae (strain TN), this protein is Enolase.